The primary structure comprises 350 residues: N-acetyl-gamma-glutamyl-phosphate reductase (350 aa).

The active site involves Cys-154.

Belongs to the NAGSA dehydrogenase family. Type 1 subfamily.

It is found in the cytoplasm. The enzyme catalyses N-acetyl-L-glutamate 5-semialdehyde + phosphate + NADP(+) = N-acetyl-L-glutamyl 5-phosphate + NADPH + H(+). It functions in the pathway amino-acid biosynthesis; L-arginine biosynthesis; N(2)-acetyl-L-ornithine from L-glutamate: step 3/4. In terms of biological role, catalyzes the NADPH-dependent reduction of N-acetyl-5-glutamyl phosphate to yield N-acetyl-L-glutamate 5-semialdehyde. The protein is N-acetyl-gamma-glutamyl-phosphate reductase of Corynebacterium efficiens (strain DSM 44549 / YS-314 / AJ 12310 / JCM 11189 / NBRC 100395).